The primary structure comprises 1861 residues: Protein TANC1 (1861 aa).

The residue at position 1 (M1) is an N-acetylmethionine. Disordered regions lie at residues 1–46, 63–99, 206–225, 257–311, and 439–486; these read MLKA…SSLP, SLPS…ESPR, KSPC…KDSG, QKGV…MPRP, and QIAS…ISAE. The span at 8-21 shows a compositional bias: basic and acidic residues; that stretch reads KSREGGKGGKKEAG. Phosphoserine occurs at positions 63, 66, 67, 207, and 270. Positions 206–219 are enriched in polar residues; sequence KSPCETISSPSSTL. Over residues 440–455 the composition is skewed to polar residues; sequence IASNSPGSSPKTSDPT. The span at 461–480 shows a compositional bias: low complexity; sequence TPLLSPSSSTSASSTAKTPL. A Phosphoserine modification is found at S465. ANK repeat units follow at residues 896-928, 934-963, 967-996, 1000-1029, 1040-1069, 1078-1107, 1111-1140, 1144-1173, 1177-1206, 1210-1239, and 1243-1272; these read EGLS…NVNY, NNAP…CLDG, NGMT…RVDH, KGQC…SPGP, ALQQ…EHEV, WGET…AVSR, RGVP…DVNL, QGRT…ALSS, EGLS…AIDQ, NGRT…VIEH, and SGMR…KLGN. 3 TPR repeats span residues 1289–1322, 1336–1369, and 1371–1403; these read LQKL…FPRE, VSLY…KPKS, and EAFY…CPTN. A compositionally biased stretch (low complexity) spans 1421 to 1431; it reads QRSQQQKQQGP. Disordered stretches follow at residues 1421–1485 and 1636–1696; these read QRSQ…SVPS and VAVD…KVQG. S1439 carries the phosphoserine modification. Low complexity-rich tracts occupy residues 1467–1485 and 1659–1689; these read QEES…SVPS and SLTS…SSFS. 3 positions are modified to phosphoserine: S1668, S1676, and S1677.

Belongs to the TANC family. As to quaternary structure, interacts probably directly with DLG1, DLG4, HOMER1. Interacts with DLGAP1, INA, CAMK2A, GRIN2B and GRIA1. Interacts with TNIK. Interacts with MINK1. Post-translationally, phosphorylated; by MINK1 and TNIK upon stimulation by RAP2A.

It localises to the postsynaptic density. Its function is as follows. May be a scaffold component in the postsynaptic density. The chain is Protein TANC1 (TANC1) from Homo sapiens (Human).